The sequence spans 176 residues: Ubiquinol-cytochrome c reductase iron-sulfur subunit (176 aa).

Residues 15 to 36 (FLFVATGAAAAVGGAAALWPFI) form a helical membrane-spanning segment. Positions 87-174 (ARAVNVASLP…YQFVSDTKIQ (88 aa)) constitute a Rieske domain. Cys-119, His-121, Cys-138, and His-141 together coordinate [2Fe-2S] cluster. Cysteines 124 and 140 form a disulfide.

The protein belongs to the Rieske iron-sulfur protein family. As to quaternary structure, the main subunits of complex b-c1 are: cytochrome b, cytochrome c1 and the Rieske protein. Requires [2Fe-2S] cluster as cofactor.

Its subcellular location is the cell membrane. It catalyses the reaction a quinol + 2 Fe(III)-[cytochrome c](out) = a quinone + 2 Fe(II)-[cytochrome c](out) + 2 H(+)(out). Component of the ubiquinol-cytochrome c reductase complex (complex III or cytochrome b-c1 complex), which is a respiratory chain that generates an electrochemical potential coupled to ATP synthesis. In Bradyrhizobium diazoefficiens (strain JCM 10833 / BCRC 13528 / IAM 13628 / NBRC 14792 / USDA 110), this protein is Ubiquinol-cytochrome c reductase iron-sulfur subunit (petA).